Here is a 264-residue protein sequence, read N- to C-terminus: Late embryogenesis abundant protein D-34 (264 aa).

Positions 1–16 (MSQGQPRRPQQPAGQG) are enriched in low complexity. The interval 1–23 (MSQGQPRRPQQPAGQGENQEPIK) is disordered. 3 consecutive SMP domains span residues 22–76 (IKYG…RNEQ), 138–194 (ITIG…AHNA), and 203–261 (IKLN…LNEN).

It belongs to the LEA type SMP family.

Functionally, LEA proteins are late embryonic proteins abundant in higher plant seed embryos. There are two subsets of LEA proteins (5a and 5b), the first ones are expressed when the cotyledon weight reach 80 mg and the second set are expressed above 100 mg. The function of those proteins is not known. This chain is Late embryogenesis abundant protein D-34, found in Gossypium hirsutum (Upland cotton).